The chain runs to 192 residues: Dihydrofolate reductase (192 aa).

Residues 5–191 enclose the DHFR domain; it reads NVAIIVAALK…FTYNYTLWTR (187 aa). NADP(+) is bound by residues Ala11 and 18–24; that span reads GIGYKGK. 32 to 37 provides a ligand contact to substrate; it reads EIRYFK. 56–58 lines the NADP(+) pocket; the sequence is RKT. Arg72 provides a ligand contact to substrate. 78 to 80 is an NADP(+) binding site; it reads SRS. The substrate site is built by Ile112 and Tyr118. 113 to 120 contacts NADP(+); the sequence is GGAEIYNE.

This sequence belongs to the dihydrofolate reductase family.

It catalyses the reaction (6S)-5,6,7,8-tetrahydrofolate + NADP(+) = 7,8-dihydrofolate + NADPH + H(+). It participates in cofactor biosynthesis; tetrahydrofolate biosynthesis; 5,6,7,8-tetrahydrofolate from 7,8-dihydrofolate: step 1/1. Functionally, key enzyme in folate metabolism. Catalyzes an essential reaction for de novo glycine and purine synthesis, and for DNA precursor synthesis. This Candida albicans (Yeast) protein is Dihydrofolate reductase (DFR1).